We begin with the raw amino-acid sequence, 83 residues long: Translational regulator CsrA (83 aa).

This sequence belongs to the CsrA/RsmA family. Homodimer; the beta-strands of each monomer intercalate to form a hydrophobic core, while the alpha-helices form wings that extend away from the core.

The protein localises to the cytoplasm. Functionally, a translational regulator that binds mRNA to regulate translation initiation and/or mRNA stability. Usually binds in the 5'-UTR at or near the Shine-Dalgarno sequence preventing ribosome-binding, thus repressing translation. Its main target seems to be the major flagellin gene, while its function is anatagonized by FliW. The protein is Translational regulator CsrA of Nocardioides sp. (strain ATCC BAA-499 / JS614).